A 449-amino-acid polypeptide reads, in one-letter code: Sensor protein QseC (449 aa).

The Cytoplasmic segment spans residues 1 to 12; that stretch reads MKLTQRLSLRVR. Residues 13–33 form a helical membrane-spanning segment; the sequence is LTLIFLILVSITWAISSFVAW. Residues 34–161 lie on the Periplasmic side of the membrane; the sequence is RKTTDNVDEL…REDMALAIVA (128 aa). The chain crosses the membrane as a helical span at residues 162-182; that stretch reads AQLTPWLIALPFMLLILLLLL. In terms of domain architecture, HAMP spans 183–235; that stretch reads HRELRPLKKLAQALRFRSPESETPLDAKGVPSEVRPLVEALNQLFSRIHSMMV. Topologically, residues 183 to 449 are cytoplasmic; that stretch reads HRELRPLKKL…EGGFEAVVSW (267 aa). The 207-residue stretch at 243-449 folds into the Histidine kinase domain; the sequence is DAAHELRSPL…EGGFEAVVSW (207 aa). Residue H246 is modified to Phosphohistidine; by autocatalysis.

The protein resides in the cell inner membrane. The catalysed reaction is ATP + protein L-histidine = ADP + protein N-phospho-L-histidine.. Its function is as follows. Member of a two-component regulatory system QseB/QseC. Activates the flagella regulon by activating transcription of FlhDC. May activate QseB by phosphorylation. In Salmonella typhimurium (strain LT2 / SGSC1412 / ATCC 700720), this protein is Sensor protein QseC (qseC).